The sequence spans 469 residues: Adenosylhomocysteinase (469 aa).

Substrate is bound by residues threonine 63, aspartate 139, and glutamate 164. 165–167 (TTT) serves as a coordination point for NAD(+). Residues lysine 194 and aspartate 198 each contribute to the substrate site. NAD(+) is bound by residues asparagine 199, 228-233 (GYGDVG), glutamate 251, asparagine 300, 321-323 (IGH), and asparagine 375.

This sequence belongs to the adenosylhomocysteinase family. NAD(+) is required as a cofactor.

It localises to the cytoplasm. It catalyses the reaction S-adenosyl-L-homocysteine + H2O = L-homocysteine + adenosine. The protein operates within amino-acid biosynthesis; L-homocysteine biosynthesis; L-homocysteine from S-adenosyl-L-homocysteine: step 1/1. Functionally, may play a key role in the regulation of the intracellular concentration of adenosylhomocysteine. In Pseudomonas putida (strain ATCC 700007 / DSM 6899 / JCM 31910 / BCRC 17059 / LMG 24140 / F1), this protein is Adenosylhomocysteinase.